Reading from the N-terminus, the 74-residue chain is MDKRIEEVAAKALEKMGNDRYRLSLVVAKRAEQLANGATPLVDFDKNKNKLADIALYEIAENKITLEGLVETNR.

Belongs to the RNA polymerase subunit omega family. The RNAP catalytic core consists of 2 alpha, 1 beta, 1 beta' and 1 omega subunit. When a sigma factor is associated with the core the holoenzyme is formed, which can initiate transcription.

It catalyses the reaction RNA(n) + a ribonucleoside 5'-triphosphate = RNA(n+1) + diphosphate. In terms of biological role, promotes RNA polymerase assembly. Latches the N- and C-terminal regions of the beta' subunit thereby facilitating its interaction with the beta and alpha subunits. This chain is DNA-directed RNA polymerase subunit omega, found in Campylobacter jejuni subsp. jejuni serotype O:6 (strain 81116 / NCTC 11828).